Reading from the N-terminus, the 429-residue chain is Ribosomal RNA small subunit methyltransferase B (429 aa).

S-adenosyl-L-methionine contacts are provided by residues 254–260 (CSAPGGK), Asp-277, Asp-303, and Asp-322. Cys-375 acts as the Nucleophile in catalysis. The segment at 397-419 (ALSETGTPDQPGQQNLPGGEEGD) is disordered. A compositionally biased stretch (polar residues) spans 400–412 (ETGTPDQPGQQNL).

The protein belongs to the class I-like SAM-binding methyltransferase superfamily. RsmB/NOP family.

It localises to the cytoplasm. It catalyses the reaction cytidine(967) in 16S rRNA + S-adenosyl-L-methionine = 5-methylcytidine(967) in 16S rRNA + S-adenosyl-L-homocysteine + H(+). In terms of biological role, specifically methylates the cytosine at position 967 (m5C967) of 16S rRNA. The chain is Ribosomal RNA small subunit methyltransferase B from Salmonella dublin (strain CT_02021853).